The sequence spans 2551 residues: Piezo-type mechanosensitive ion channel component (2551 aa).

The next 8 membrane-spanning stretches (helical) occupy residues 5–25, 27–47, 56–76, 106–126, 204–226, 231–250, 256–276, and 320–340; these read YACMVLQRIVVPAVLVLAALM, PVGISFVYLLMFFVSPFVPLA, VTAFFIILLTLSTLVLLGHIT, FIDLQPFAIIEWLVPEVLVFA, IHFEGLVKISPLFCLATLFFAAV, VPGGFYFLIFLLSGTYWATC, GFALLLRCVMVVLVLHSLSIV, and LSLDSYLNPFALFFAYFALAL. Positions 354 to 375 are disordered; it reads STRKARTPQPLESGSSVAPSVT. A compositionally biased stretch (polar residues) spans 363–375; that stretch reads PLESGSSVAPSVT. 9 helical membrane passes run 395–415, 424–444, 463–483, 516–536, 548–568, 588–608, 611–631, 639–659, and 695–715; these read TTTSILDQISYGFVSVGGFIY, ILMMAWSIVYHSWLTFVLLLS, PFIVLYAEALLIAQYIYGMDL, VPLIVKTAFVLMFWVTSRQFF, LADFIAPLQITVGSAGSSYLI, LLVRLWIWLLVLVIFLCAITG, MTGFRICYMALFLFFLLVFQS, IMYGFWLFLIFYAMSILILIY, and FLHLVSPTIIVILTVIQVHYF. Over residues 731–741 the composition is skewed to polar residues; it reads GSAQQKPTETT. A disordered region spans residues 731 to 772; it reads GSAQQKPTETTALEPAPSKRRGSAGSLRKSQGPSAEAAPGAT. The next 12 helical transmembrane spans lie at 819–839, 857–877, 910–930, 973–993, 994–1014, 1022–1042, 1071–1091, 1152–1172, 1174–1194, 1198–1218, 1239–1259, and 1275–1295; these read IAAFVCSVSEVCVLHIIFVGF, LISFIVTVIVLSKMIYQIEYL, LMSLLRTYIIYMVIVTMHAVI, LNFGFYKFGIEISLIALVSTI, TYRQDIVAVVYALWLVVLLLL, IWGVFQAFFAISILTQYIVLV, GALHFNHVPKLIFDFIVLVIL, VLCGFYWFTLAVVFLAGTNIA, LLALGYLIGAFIFLWQGSDFY, IHTIIFRWKWLLAFNVANILI, WLVHMLGITCTSNVLTEQIML, and ITHQVVLLWDTICFAFIIFQL. Disordered stretches follow at residues 1426 to 1521 and 1592 to 1658; these read NITE…AKDS and ESDE…PQQQ. Over residues 1430-1448 the composition is skewed to basic and acidic residues; sequence SEMKMQRRKTLYDKSKDAP. The segment covering 1466 to 1477 has biased composition (low complexity); sequence ATASSSASPAPT. Positions 1497-1511 are enriched in basic and acidic residues; sequence QTSKETSDSKSKMEV. 2 stretches are compositionally biased toward low complexity: residues 1621-1634 and 1644-1658; these read PTSTTLNTNTTTTP and LQPLQPNTTSTPQQQ. The next 4 helical transmembrane spans lie at 1718–1738, 1741–1761, 1770–1790, and 1817–1837; these read ISSWYALLANTDLICYIVVFI, VVNASLISLPLPIMVFLWGTL, FWVTLIAYTQAIVLIKCIFQF, and AHYAIYDLILLLVLFLHRYLL. The disordered stretch occupies residues 1854-1876; that stretch reads FTKPTASIDERDDSDNLSQPDSR. A run of 7 helical transmembrane segments spans residues 1937-1957, 1979-1999, 2008-2028, 2033-2053, 2075-2095, 2151-2171, and 2431-2451; these read ALMFLCDFVNFFVLLFGFTAF, IPFLIMLLVQFLLIVIDRALY, IIFHFFSVIGIHIWMFFVVPA, TFNSLAPPIIFYVIKCFYMLL, FSMVNMIAFKVYMQIPFLYEL, IMGGTIVLLIVICIWGPLCLF, and TFSFLTAGGIIGLYTTFVLLA. The disordered stretch occupies residues 2522-2551; the sequence is EYVDDDGDTDSIPSRMSVRRPEQLQPQQPQ.

It belongs to the PIEZO (TC 1.A.75) family.

Its subcellular location is the cell membrane. Component of a mechanosensitive channel required for rapidly adapting mechanically activated (MA) currents. Plays a major role in nociception (response to strong or painful touch). Required for maintaining the mechanosensitivity of tarsal bristle mechanosensors. During their evalulation of potential egg-laying sites, females determine the softest substrate for their eggs first by making a coarse evaluation of substrate hardness using mechanosensitive channels nan and Piezo in the leg tarsal bristles, followed by a much finer assessment using nan, iav and Tmc mechanosensitive channels on the labellum. Acts in the nompC- and nan-expressing neurons of the female leg tarsals, to sense the mild differences in egg-laying substrate stiffness. In Drosophila melanogaster (Fruit fly), this protein is Piezo-type mechanosensitive ion channel component.